Reading from the N-terminus, the 226-residue chain is Enolase-phosphatase E1 (226 aa).

This sequence belongs to the HAD-like hydrolase superfamily. MasA/MtnC family. Monomer. Requires Mg(2+) as cofactor.

It carries out the reaction 5-methylsulfanyl-2,3-dioxopentyl phosphate + H2O = 1,2-dihydroxy-5-(methylsulfanyl)pent-1-en-3-one + phosphate. The protein operates within amino-acid biosynthesis; L-methionine biosynthesis via salvage pathway; L-methionine from S-methyl-5-thio-alpha-D-ribose 1-phosphate: step 3/6. It participates in amino-acid biosynthesis; L-methionine biosynthesis via salvage pathway; L-methionine from S-methyl-5-thio-alpha-D-ribose 1-phosphate: step 4/6. Functionally, bifunctional enzyme that catalyzes the enolization of 2,3-diketo-5-methylthiopentyl-1-phosphate (DK-MTP-1-P) into the intermediate 2-hydroxy-3-keto-5-methylthiopentenyl-1-phosphate (HK-MTPenyl-1-P), which is then dephosphorylated to form the acireductone 1,2-dihydroxy-3-keto-5-methylthiopentene (DHK-MTPene). This Shewanella sp. (strain W3-18-1) protein is Enolase-phosphatase E1.